We begin with the raw amino-acid sequence, 260 residues long: Receptor-recognizing protein gp38 (260 aa).

10 short sequence motifs (GRM) span residues 116–123 (GRGGNGGS), 125–132 (AAGAAGGN), 152–160 (GGGGGGGGG), 162–173 (RGKLIFGGGGGR), 176–182 (GAGGSSS), 185–191 (SSGATAG), 194–204 (SAPGKGSVGEG), 210–216 (TGGAGGN), 219–224 (AAGGRC), and 228–240 (GNGT…AAGK). Residues 176–197 (GAGGSSSHMSSGATAGTISAPG) form a disordered region. The span at 180 to 191 (SSSHMSSGATAG) shows a compositional bias: low complexity.

The protein belongs to the receptor-recognizing protein gp38 family.

The protein localises to the virion. Its function is as follows. Receptor binding protein (RBP) that is at the tip of the long tail fibers and serves as the phage recognition site for the attachment host receptor OmpA. This Escherichia coli (Bacteriophage K3) protein is Receptor-recognizing protein gp38 (38).